A 500-amino-acid chain; its full sequence is Cysteine-rich secretory protein LCCL domain-containing 1 (500 aa).

The signal sequence occupies residues 1 to 23 (MKCTAREWLRVTTVLFMARAIPA). Residues 66–206 (LDLHNKLRSQ…PKAVYLVCNY (141 aa)) enclose the SCP domain. Over residues 254-280 (EETNEIERQQSQVHDTHVRTRSDDSSR) the composition is skewed to basic and acidic residues. The disordered stretch occupies residues 254-281 (EETNEIERQQSQVHDTHVRTRSDDSSRN). LCCL domains lie at 289–384 (MSQI…ANSF) and 390–492 (TVQA…PGGK). Intrachain disulfides connect cysteine 295/cysteine 313, cysteine 317/cysteine 337, cysteine 396/cysteine 418, and cysteine 422/cysteine 445.

It belongs to the CRISP family.

Its subcellular location is the secreted. This Homo sapiens (Human) protein is Cysteine-rich secretory protein LCCL domain-containing 1 (CRISPLD1).